The primary structure comprises 260 residues: MIVVKIGGSVVCKDPTKVVENLPNYADKAVVVHGGGCLVNDLLKRMGVEPKFLTHPGGLVSRYTDLETLKVFVMAMSWINKSIVASLHALGVEALGLTGADLGVVKARRKEKVLVVDERGRQRVVDGGYVGRVVDIAVDKLRPPPLKVLSPVAVSERGELLNIDGDQLAFDVAKRLGAERLVLLSDVDGLIIGGSVVPRLTAAQAEELVKNEEVRGGMKRKLLMAAEAAKLGLEVVISNGLVDKPIDAALSGRGTHVVKG.

Residues 35–36, arginine 62, and asparagine 162 contribute to the substrate site; that span reads GG.

This sequence belongs to the acetylglutamate kinase family. LysZ subfamily.

It is found in the cytoplasm. The enzyme catalyses [amino-group carrier protein]-C-terminal-N-(1,4-dicarboxybutan-1-yl)-L-glutamine + ATP = [amino-group carrier protein]-C-terminal-N-(1-carboxy-5-phosphooxy-5-oxopentan-1-yl)-L-glutamine + ADP. The catalysed reaction is [amino-group carrier protein]-C-terminal-gamma-(L-glutamyl)-L-glutamate + ATP = [amino-group carrier protein]-C-terminal-gamma-(5-phospho-L-glutamyl)-L-glutamate + ADP. Its pathway is amino-acid biosynthesis; L-lysine biosynthesis via AAA pathway; L-lysine from L-alpha-aminoadipate (Thermus route): step 2/5. The protein operates within amino-acid biosynthesis; L-arginine biosynthesis. Functionally, involved in both the arginine and lysine biosynthetic pathways. Phosphorylates the LysW-bound precursors glutamate (for arginine biosynthesis), respectively alpha-aminoadipate (for lysine biosynthesis). This is Putative [LysW]-aminoadipate/[LysW]-glutamate kinase from Pyrobaculum neutrophilum (strain DSM 2338 / JCM 9278 / NBRC 100436 / V24Sta) (Thermoproteus neutrophilus).